A 269-amino-acid chain; its full sequence is Putative pyruvate, phosphate dikinase regulatory protein (269 aa).

147-154 (GVSRTSKT) is a binding site for ADP.

This sequence belongs to the pyruvate, phosphate/water dikinase regulatory protein family. PDRP subfamily.

The catalysed reaction is N(tele)-phospho-L-histidyl/L-threonyl-[pyruvate, phosphate dikinase] + ADP = N(tele)-phospho-L-histidyl/O-phospho-L-threonyl-[pyruvate, phosphate dikinase] + AMP + H(+). The enzyme catalyses N(tele)-phospho-L-histidyl/O-phospho-L-threonyl-[pyruvate, phosphate dikinase] + phosphate + H(+) = N(tele)-phospho-L-histidyl/L-threonyl-[pyruvate, phosphate dikinase] + diphosphate. In terms of biological role, bifunctional serine/threonine kinase and phosphorylase involved in the regulation of the pyruvate, phosphate dikinase (PPDK) by catalyzing its phosphorylation/dephosphorylation. In Geotalea daltonii (strain DSM 22248 / JCM 15807 / FRC-32) (Geobacter daltonii), this protein is Putative pyruvate, phosphate dikinase regulatory protein.